The sequence spans 712 residues: NURS complex subunit red1 (712 aa).

Basic and acidic residues predominate over residues 1–22; that stretch reads MSRSINLDELRKKALESKKKNE. Disordered regions lie at residues 1–71, 107–195, and 323–348; these read MSRS…DRFP, NKTF…TTNQ, and DDFS…GLTM. Positions 5 to 32 form a coiled coil; the sequence is INLDELRKKALESKKKNEEDESNDSDKE. The segment covering 23–42 has biased composition (acidic residues); sequence EDESNDSDKEDGEISEDDPV. Positions 130 to 141 are enriched in low complexity; sequence SETSDSSNTSQS. Polar residues-rich tracts occupy residues 178–193 and 327–348; these read FLST…SKTT and NSKI…GLTM. The stretch at 351–379 forms a coiled coil; the sequence is SDYLALLRNKEEEIRRMTKLILRLESNKK. The segment at 428–447 is disordered; that stretch reads PSISSSGASSSAATTNSDTT. Residues 471–501 are a coiled coil; the sequence is AQIKKSEIDILNNLIEKEEGELTKYQTLVKS. The segment covering 545 to 567 has biased composition (polar residues); sequence QADENSSQILSSKTSNAPNGTTE. Residues 545–568 form a disordered region; sequence QADENSSQILSSKTSNAPNGTTET. The segment at 618–639 adopts a C3H1-type zinc-finger fold; the sequence is FCKYETTGGVCNDDHCEASHFR.

Interacts with mmi1, pla1 and rrp6.

It is found in the nucleus. Its function is as follows. Promotes the exosome-mediated degradation of mRNAs containing a DSR (determinant of selective removal) signal sequence from mitotic cells. The polypeptide is NURS complex subunit red1 (Schizosaccharomyces pombe (strain 972 / ATCC 24843) (Fission yeast)).